Reading from the N-terminus, the 287-residue chain is MMKNILAIQSHVVYGHAGNSAAEFPMRRLGANVWPLNTVQFSNHTQYGKWTGCVMPPSHLTEIVQGIAAIDKLHTCDAVLSGYLGSAEQGEHILGIVRQVKAANPQAKYFCDPVMGHPEKGCIVAPGVAEFHVRHGLPASDIIAPNLVELEILCEHAVNNVEEAVLAARELIEQGPQIVLVKHLARAGYSRDRFEMLLVTADEVWHISRPLVDFGMRQPVGVGDVTSGLLLVKLLQGATLQEALEHVTAAVYEIMVTTKAMQEYELQVVAAQDRIAKPEHYFSATKL.

Substrate contacts are provided by residues S10 and 45 to 46 (TQ). Residues D112, A144, E149, K182, and 209-212 (RPLV) contribute to the ATP site. D224 provides a ligand contact to substrate.

Belongs to the pyridoxine kinase family. PdxY subfamily. In terms of assembly, homodimer. It depends on Mg(2+) as a cofactor.

The catalysed reaction is pyridoxal + ATP = pyridoxal 5'-phosphate + ADP + H(+). It participates in cofactor metabolism; pyridoxal 5'-phosphate salvage; pyridoxal 5'-phosphate from pyridoxal: step 1/1. Functionally, pyridoxal kinase involved in the salvage pathway of pyridoxal 5'-phosphate (PLP). Catalyzes the phosphorylation of pyridoxal to PLP. The chain is Pyridoxal kinase PdxY from Shigella flexneri.